The chain runs to 723 residues: Phenylalanine ammonia-lyase (723 aa).

The Proton donor/acceptor role is filled by tyrosine 77. A cross-link (5-imidazolinone (Ala-Gly)) is located at residues 182–184; the sequence is ASG. At serine 183 the chain carries 2,3-didehydroalanine (Ser). Positions 241, 336, 342, 372, 443, 471, and 474 each coordinate (E)-cinnamate.

The protein belongs to the PAL/histidase family. In terms of processing, contains an active site 4-methylidene-imidazol-5-one (MIO), which is formed autocatalytically by cyclization and dehydration of residues Ala-Ser-Gly.

Its subcellular location is the cytoplasm. It catalyses the reaction L-phenylalanine = (E)-cinnamate + NH4(+). It participates in secondary metabolite biosynthesis. It functions in the pathway phenylpropanoid metabolism; trans-cinnamate biosynthesis; trans-cinnamate from L-phenylalanine: step 1/1. Functionally, phenylalanine ammonia-lyase; part of the gene cluster that mediates the biosynthesis of squalestatin S1 (SQS1, also known as zaragozic acid A), a heavily oxidized fungal polyketide that offers potent cholesterol lowering activity by targeting squalene synthase (SS). SQS1 is composed of a 2,8-dioxobicyclic[3.2.1]octane-3,4,5-tricarboxyclic acid core that is connected to two lipophilic polyketide arms. These initial steps feature the priming of an unusual benzoic acid starter unit onto the highly reducing polyketide synthase clz14, followed by oxaloacetate extension and product release to generate a tricarboxylic acid containing product. The phenylalanine ammonia lyase (PAL) clz10 and the acyl-CoA ligase clz12 are involved in transforming phenylalanine into benzoyl-CoA. The citrate synthase-like protein clz17 is involved in connecting the C-alpha-carbons of the hexaketide chain and oxaloacetate to afford the tricarboxylic acid unit. The potential hydrolytic enzymes, clz11 and clz13, are in close proximity to pks2 and may participate in product release. On the other side, the tetraketide arm is synthesized by a the squalestatin tetraketide synthase clz2 and enzymatically esterified to the core in the last biosynthetic step, by the acetyltransferase clz6. The biosynthesis of the tetraketide must involve 3 rounds of chain extension. After the first and second rounds methyl-transfer occurs, and in all rounds of extension the ketoreductase and dehydratase are active. The enoyl reductase and C-MeT of clz2 are not active in the final round of extension. The acetyltransferase clz6 appears to have a broad substrate selectivity for its acyl CoA substrate, allowing the in vitro synthesis of novel squalestatins. The biosynthesis of SQS1 requires several oxidative steps likely performed by oxidoreductases clz3, clz15 and clz16. Finally, in support of the identification of the cluster as being responsible for SQS1 production, the cluster contains a gene encoding a putative squalene synthase (SS) clz20, suggesting a likely mechanism for self-resistance. This Cochliobolus lunatus (Filamentous fungus) protein is Phenylalanine ammonia-lyase.